The chain runs to 450 residues: Glucose-6-phosphate isomerase (450 aa).

Position 39 is a phosphothreonine (T39). E291 serves as the catalytic Proton donor. Active-site residues include H312 and K426.

This sequence belongs to the GPI family.

Its subcellular location is the cytoplasm. The enzyme catalyses alpha-D-glucose 6-phosphate = beta-D-fructose 6-phosphate. It participates in carbohydrate biosynthesis; gluconeogenesis. The protein operates within carbohydrate degradation; glycolysis; D-glyceraldehyde 3-phosphate and glycerone phosphate from D-glucose: step 2/4. Functionally, catalyzes the reversible isomerization of glucose-6-phosphate to fructose-6-phosphate. In Bacillus cytotoxicus (strain DSM 22905 / CIP 110041 / 391-98 / NVH 391-98), this protein is Glucose-6-phosphate isomerase.